A 502-amino-acid polypeptide reads, in one-letter code: Glycerol kinase (502 aa).

Thr13 is a binding site for ADP. Positions 13, 14, and 15 each coordinate ATP. Thr13 is a binding site for sn-glycerol 3-phosphate. Arg17 contributes to the ADP binding site. Sn-glycerol 3-phosphate is bound by residues Arg83, Glu84, Tyr136, and Asp246. Glycerol contacts are provided by Arg83, Glu84, Tyr136, Asp246, and Gln247. ADP is bound by residues Thr268 and Gly311. Positions 268, 311, 315, and 412 each coordinate ATP. ADP contacts are provided by Gly412 and Asn416.

The protein belongs to the FGGY kinase family.

The enzyme catalyses glycerol + ATP = sn-glycerol 3-phosphate + ADP + H(+). It functions in the pathway polyol metabolism; glycerol degradation via glycerol kinase pathway; sn-glycerol 3-phosphate from glycerol: step 1/1. Its activity is regulated as follows. Inhibited by fructose 1,6-bisphosphate (FBP). In terms of biological role, key enzyme in the regulation of glycerol uptake and metabolism. Catalyzes the phosphorylation of glycerol to yield sn-glycerol 3-phosphate. The polypeptide is Glycerol kinase (Francisella tularensis subsp. tularensis (strain FSC 198)).